The following is a 456-amino-acid chain: Solute carrier family 38 member 6 (456 aa).

Position 1 is an N-acetylmethionine (Met-1). Phosphoserine is present on residues Ser-4 and Ser-7. 5 helical membrane-spanning segments follow: residues 42-62 (SPGVSFGLSVFNLMNAIMGSG), 85-105 (VALLASYSVHLLLSMCIQTAV), 111-131 (LGLFAFGLPGKLVVAGTIIIQ), 170-190 (LLIIICVGIVFPLALLPKIGF), and 191-211 (LGYTSSLSFFFMMFFALVVII). A disulfide bridge links Cys-218 with Cys-238. A glycan (N-linked (GlcNAc...) asparagine) is linked at Asn-233. The chain crosses the membrane as a helical span at residues 250-270 (AYALPTMAFSFLCHTSILPIY). N-linked (GlcNAc...) asparagine glycosylation occurs at Asn-283. A run of 5 helical transmembrane segments spans residues 288-308 (AIALSFLIYFISALFGYLTFY), 327-347 (VVVMTVKLCILFAVLLTVPLI), 371-391 (FLITLALNIIIVLLAIYVPDI), 394-414 (VFGVVGASTSTCLIFIFPGLF), and 431-451 (AFVLLIFGILVGNFSLALIIF).

It belongs to the amino acid/polyamine transporter 2 family.

The protein resides in the cell membrane. It localises to the synapse. The catalysed reaction is L-glutamine(out) = L-glutamine(in). It carries out the reaction L-glutamate(out) = L-glutamate(in). Amino acid transporter with an apparent selectivity for L-glutamine and L-glutamate. May facilitate glutamine uptake in excitatory neurons. The transport mechanism remains to be elucidated. This chain is Solute carrier family 38 member 6, found in Homo sapiens (Human).